The sequence spans 250 residues: PHD finger protein ALFIN-LIKE 3 (250 aa).

Methionine 1 is modified (N-acetylmethionine). The tract at residues 146-192 (DKSSAANQNGNKSKSNSKVRTSEGKSSKTKQPKEEDEEIDEDDEDDH) is disordered. Positions 149 to 163 (SAANQNGNKSKSNSK) are enriched in low complexity. Positions 179 to 192 (EEDEEIDEDDEDDH) are enriched in acidic residues. A PHD-type zinc finger spans residues 194-246 (ETLCGACGDSDGADEFWICCDLCEKWFHGKCVKITPARAEHIKQYKCPSCSNK).

Belongs to the Alfin family. Ubiquitously expressed.

The protein resides in the nucleus. Histone-binding component that specifically recognizes H3 tails trimethylated on 'Lys-4' (H3K4me3), which mark transcription start sites of virtually all active genes. This chain is PHD finger protein ALFIN-LIKE 3 (AL3), found in Arabidopsis thaliana (Mouse-ear cress).